Reading from the N-terminus, the 171-residue chain is Ribosome maturation factor RimM (171 aa).

One can recognise a PRC barrel domain in the interval Ala96–Leu170.

The protein belongs to the RimM family. In terms of assembly, binds ribosomal protein uS19.

Its subcellular location is the cytoplasm. An accessory protein needed during the final step in the assembly of 30S ribosomal subunit, possibly for assembly of the head region. Essential for efficient processing of 16S rRNA. May be needed both before and after RbfA during the maturation of 16S rRNA. It has affinity for free ribosomal 30S subunits but not for 70S ribosomes. This is Ribosome maturation factor RimM from Bacillus mycoides (strain KBAB4) (Bacillus weihenstephanensis).